The primary structure comprises 255 residues: Microfibril-associated glycoprotein 4 (255 aa).

The first 20 residues, 1–20 (MEALLVLPLLLLLSAGPCAP), serve as a signal peptide directing secretion. Residues 26-28 (RGD) carry the Cell attachment site motif. The Fibrinogen C-terminal domain maps to 32–255 (KSCLQLPLDC…KRTEMKIRRA (224 aa)). N-linked (GlcNAc...) asparagine glycosylation is found at N87 and N137.

As to quaternary structure, homodimer. Can also form higher oligomers. Interacts with FBN1, FBN2 and LOX. Interacts with COL1A1 in a Ca (2+)-dependent manner. Interacts with ELN in a Ca (2+)-dependent manner; this interaction promotes ELN self-assembly.

Its subcellular location is the secreted. It is found in the extracellular space. The protein localises to the extracellular matrix. Its function is as follows. Could be involved in calcium-dependent cell adhesion or intercellular interactions. May contribute to the elastic fiber assembly and/or maintenance. The sequence is that of Microfibril-associated glycoprotein 4 (MFAP4) from Bos taurus (Bovine).